A 341-amino-acid chain; its full sequence is S-adenosylmethionine:tRNA ribosyltransferase-isomerase (341 aa).

This sequence belongs to the QueA family. In terms of assembly, monomer.

It is found in the cytoplasm. The enzyme catalyses 7-aminomethyl-7-carbaguanosine(34) in tRNA + S-adenosyl-L-methionine = epoxyqueuosine(34) in tRNA + adenine + L-methionine + 2 H(+). It participates in tRNA modification; tRNA-queuosine biosynthesis. Transfers and isomerizes the ribose moiety from AdoMet to the 7-aminomethyl group of 7-deazaguanine (preQ1-tRNA) to give epoxyqueuosine (oQ-tRNA). The polypeptide is S-adenosylmethionine:tRNA ribosyltransferase-isomerase (Clostridium botulinum (strain ATCC 19397 / Type A)).